We begin with the raw amino-acid sequence, 116 residues long: Iron-sulfur cluster insertion protein ErpA (116 aa).

The iron-sulfur cluster site is built by cysteine 44, cysteine 108, and cysteine 110.

The protein belongs to the HesB/IscA family. In terms of assembly, homodimer. It depends on iron-sulfur cluster as a cofactor.

Required for insertion of 4Fe-4S clusters for at least IspG. This is Iron-sulfur cluster insertion protein ErpA from Shewanella pealeana (strain ATCC 700345 / ANG-SQ1).